The primary structure comprises 199 residues: MADVPSMDALVALLRRLPGIGPRSAQRISYELLVRKRDLMPQLAAAFQQAHAVVRFCERCNNLSEAPLCAVCRSEHRDRSILCVVESPADLRAIEDTGVFVGEFFVLMGHLSPLDGIGPEALHIDRLSARLGETDLQEVIFATNPTLEGEATAQFLAGLVPDGVTISRIARGVPVGGELEYVDRSTLGRALHGRRLLDE.

The C4-type zinc-finger motif lies at 57–72; sequence CERCNNLSEAPLCAVC. The Toprim domain maps to 80–174; the sequence is SILCVVESPA…TISRIARGVP (95 aa).

Belongs to the RecR family.

In terms of biological role, may play a role in DNA repair. It seems to be involved in an RecBC-independent recombinational process of DNA repair. It may act with RecF and RecO. This is Recombination protein RecR from Acidithiobacillus ferrooxidans (strain ATCC 23270 / DSM 14882 / CIP 104768 / NCIMB 8455) (Ferrobacillus ferrooxidans (strain ATCC 23270)).